The following is a 314-amino-acid chain: tRNA dimethylallyltransferase (314 aa).

Residue 16 to 23 (GPTGVGKT) coordinates ATP. Residue 18–23 (TGVGKT) participates in substrate binding. The tract at residues 41–44 (DSMQ) is interaction with substrate tRNA.

The protein belongs to the IPP transferase family. Monomer. Mg(2+) is required as a cofactor.

The enzyme catalyses adenosine(37) in tRNA + dimethylallyl diphosphate = N(6)-dimethylallyladenosine(37) in tRNA + diphosphate. Its function is as follows. Catalyzes the transfer of a dimethylallyl group onto the adenine at position 37 in tRNAs that read codons beginning with uridine, leading to the formation of N6-(dimethylallyl)adenosine (i(6)A). The polypeptide is tRNA dimethylallyltransferase (Desulfosudis oleivorans (strain DSM 6200 / JCM 39069 / Hxd3) (Desulfococcus oleovorans)).